The sequence spans 94 residues: MKRVHVIVEGRVQGVGFRYFVQHEALKRQLTGWVKNNDDGTVEMEAQGHESAVQLFLDTIEAGTMFAKVSRMHIEQRDVRPDEKQFRIMYGGGL.

Positions 3-90 (RVHVIVEGRV…PDEKQFRIMY (88 aa)) constitute an Acylphosphatase-like domain. Residues arginine 18 and asparagine 36 contribute to the active site.

Belongs to the acylphosphatase family.

The catalysed reaction is an acyl phosphate + H2O = a carboxylate + phosphate + H(+). The chain is Acylphosphatase (acyP) from Geobacillus thermodenitrificans (strain NG80-2).